The chain runs to 204 residues: dTTP/UTP pyrophosphatase (204 aa).

D68 serves as the catalytic Proton acceptor.

It belongs to the Maf family. YhdE subfamily. It depends on a divalent metal cation as a cofactor.

It localises to the cytoplasm. It catalyses the reaction dTTP + H2O = dTMP + diphosphate + H(+). It carries out the reaction UTP + H2O = UMP + diphosphate + H(+). Its function is as follows. Nucleoside triphosphate pyrophosphatase that hydrolyzes dTTP and UTP. May have a dual role in cell division arrest and in preventing the incorporation of modified nucleotides into cellular nucleic acids. This chain is dTTP/UTP pyrophosphatase, found in Thermotoga maritima (strain ATCC 43589 / DSM 3109 / JCM 10099 / NBRC 100826 / MSB8).